The primary structure comprises 148 residues: Lysozyme C (148 aa).

Positions 1–18 are cleaved as a signal peptide; sequence MKAVIILGLVLLSVTVQG. Residues 19–148 form the C-type lysozyme domain; sequence KIFERCELAR…VSQYVQGCGV (130 aa). 4 disulfide bridges follow: C24–C146, C48–C134, C83–C99, and C95–C113. Active-site residues include E53 and D71.

Belongs to the glycosyl hydrolase 22 family. As to quaternary structure, monomer.

The protein resides in the secreted. It carries out the reaction Hydrolysis of (1-&gt;4)-beta-linkages between N-acetylmuramic acid and N-acetyl-D-glucosamine residues in a peptidoglycan and between N-acetyl-D-glucosamine residues in chitodextrins.. Its function is as follows. Lysozymes have primarily a bacteriolytic function; those in tissues and body fluids are associated with the monocyte-macrophage system and enhance the activity of immunoagents. This Miopithecus talapoin (Angolan talapoin) protein is Lysozyme C (LYZ).